The primary structure comprises 413 residues: Putative syntaxin-5 (413 aa).

Over 1 to 391 (MSDFHNIRSR…RYLQNISKNR (391 aa)) the chain is Cytoplasmic. A disordered region spans residues 257–290 (KNRRDKFSSGAAVPMGLPSSSSGANVRSKLLQDD). The t-SNARE coiled-coil homology domain occupies 321-383 (LEYAQARSNT…DMAHSELVRY (63 aa)). A helical; Anchor for type IV membrane protein membrane pass occupies residues 392 to 412 (WLMIQVFGVLMVFFVVFVLFL). Position 413 (T413) is a topological domain, extracellular.

The protein belongs to the syntaxin family.

The protein resides in the membrane. Its function is as follows. Potentially involved in docking of synaptic vesicles at presynaptic active zones. This is Putative syntaxin-5 (syx-5) from Caenorhabditis elegans.